Here is a 926-residue protein sequence, read N- to C-terminus: Translation initiation factor IF-2 (926 aa).

Disordered regions lie at residues 1 to 185 (MTDS…EEVE) and 200 to 299 (EDKA…RRRG). 2 stretches are compositionally biased toward low complexity: residues 13-24 (TGKKTLTLKPTG) and 70-96 (APAT…AAPQ). A compositionally biased stretch (polar residues) spans 110–133 (TNQYSQQRHPGQQNRPQASSQPSR). Residues 151–185 (MDARRRALAEAQVREVEDAKRRAEEEVRRQAEEVE) show a composition bias toward basic and acidic residues. A compositionally biased stretch (low complexity) spans 211 to 251 (APEPVAEPVAPVAETPRAADPAPRAPSPAGAKPAAGAPAPS). Residues 424–591 (SRPPVVTIMG…AVLLQAEILD (168 aa)) enclose the tr-type G domain. The segment at 433–440 (GHVDHGKT) is G1. 433–440 (GHVDHGKT) provides a ligand contact to GTP. The interval 458–462 (GITQH) is G2. The segment at 479 to 482 (DTPG) is G3. Residues 479 to 483 (DTPGH) and 533 to 536 (NKID) each bind GTP. Residues 533 to 536 (NKID) are G4. Residues 569 to 571 (SAK) are G5.

Belongs to the TRAFAC class translation factor GTPase superfamily. Classic translation factor GTPase family. IF-2 subfamily.

The protein localises to the cytoplasm. Functionally, one of the essential components for the initiation of protein synthesis. Protects formylmethionyl-tRNA from spontaneous hydrolysis and promotes its binding to the 30S ribosomal subunits. Also involved in the hydrolysis of GTP during the formation of the 70S ribosomal complex. The chain is Translation initiation factor IF-2 from Allorhizobium ampelinum (strain ATCC BAA-846 / DSM 112012 / S4) (Agrobacterium vitis (strain S4)).